The sequence spans 373 residues: tRNA-specific 2-thiouridylase MnmA (373 aa).

ATP contacts are provided by residues 12–19 and methionine 38; that span reads GMSGGVDS. The interaction with target base in tRNA stretch occupies residues 98–100; sequence NPD. Cysteine 103 serves as the catalytic Nucleophile. A disulfide bridge links cysteine 103 with cysteine 200. Position 128 (glycine 128) interacts with ATP. The tract at residues 150–152 is interaction with tRNA; sequence KDQ. Cysteine 200 acts as the Cysteine persulfide intermediate in catalysis. The segment at 312-313 is interaction with tRNA; that stretch reads RY.

This sequence belongs to the MnmA/TRMU family. As to quaternary structure, interacts with TusE.

The protein localises to the cytoplasm. The catalysed reaction is S-sulfanyl-L-cysteinyl-[protein] + uridine(34) in tRNA + AH2 + ATP = 2-thiouridine(34) in tRNA + L-cysteinyl-[protein] + A + AMP + diphosphate + H(+). Its function is as follows. Catalyzes the 2-thiolation of uridine at the wobble position (U34) of tRNA(Lys), tRNA(Glu) and tRNA(Gln), leading to the formation of s(2)U34, the first step of tRNA-mnm(5)s(2)U34 synthesis. Sulfur is provided by IscS, via a sulfur-relay system. Binds ATP and its substrate tRNAs. The polypeptide is tRNA-specific 2-thiouridylase MnmA (Yersinia enterocolitica serotype O:8 / biotype 1B (strain NCTC 13174 / 8081)).